Here is a 286-residue protein sequence, read N- to C-terminus: uncharacterized protein (286 aa).

The Proton donor role is filled by His183. The Nucleophile role is filled by Cys277.

This sequence belongs to the DDAH family.

This is an uncharacterized protein from Bacillus subtilis (strain 168).